We begin with the raw amino-acid sequence, 940 residues long: MSDYKSTLNLPETEFPMRGNLANREPEMLKSWTENGLYQQIRESRKDAKPFILHDGPPYANGDIHIGHSVNKILKDIIIKSKTMSGFDAPYIPGWDCHGLPIELKVEQKVGKPGHKVTAAEFRQKCREYAAKQVDGQRDDFIRLGVFADWQNPYLTMDYSTEANIVRSLSKVIDNGHLHKGVKPVHWCTDCGSALAEAEVEYEDKMSPAIDVAFTVVDKPALLAKFGVNEYPHNISMVIWTTTPWTLPANRALAVGANVEYTLVEMVKEGQAQALVLATDLYESCVERFGAESHTVLGTVAGSDLELLRFNHPFYDFDVPVILGDHVTVDSGTGVVHTAPGHGQDDFVVGQKYGLEVANPVGDNGVYKPDTEIFAGLHVFKANKNVVELLEEKGALLNHVQIKHSYPHCWRHKTPIIFRATPQWFISMDQKGLRQQALGEIEQTQWIPDWGQSRIEKMVENRPDWCISRQRTWGVPITLFVHRETEELHPDSVSLMERVAARIEQEGIQAWWDLDASELLGDEADQYRKVTDTLDVWYDSGSTFSSVVAARPEFNGHPIDLYLEGSDQHRGWFMSSLMISTAMNGKAPYKQVLTHGFTVDGQGRKMSKSVGNVIAPQHVTNKLGADILRLWVAATDYSGEMTVSDQILNRSADAYRRIRNTARFLLANINGFNPETDMVAVEDMVALDRWVVRRAAALQQELLEAYDQYNFHLVTQKLMQFCSVELGSFYLDIIKDRQYTAKEDSNARRSCQSALYLISEAMVRWIAPILSFTADEIWKLLPGERGEYVFTETWYQGLQSVALESDLSDEYWDQLLAVRAEVNKVIENARREKQVGGSLEAEVTLYADEALQAVLENLGDELRFVLLTSKTEVVALAQAPSDAIETELASLKLSLKKSEAEKCERCWHHREDVGAVAEHPTLCTRCVTNIEGEGETRQFA.

The short motif at 58 to 68 (PYANGDIHIGH) is the 'HIGH' region element. E564 is a binding site for L-isoleucyl-5'-AMP. Positions 605–609 (KMSKS) match the 'KMSKS' region motif. Residue K608 coordinates ATP. Residues C903, C906, C923, and C926 each coordinate Zn(2+).

Belongs to the class-I aminoacyl-tRNA synthetase family. IleS type 1 subfamily. Monomer. Zn(2+) serves as cofactor.

It localises to the cytoplasm. It carries out the reaction tRNA(Ile) + L-isoleucine + ATP = L-isoleucyl-tRNA(Ile) + AMP + diphosphate. Its function is as follows. Catalyzes the attachment of isoleucine to tRNA(Ile). As IleRS can inadvertently accommodate and process structurally similar amino acids such as valine, to avoid such errors it has two additional distinct tRNA(Ile)-dependent editing activities. One activity is designated as 'pretransfer' editing and involves the hydrolysis of activated Val-AMP. The other activity is designated 'posttransfer' editing and involves deacylation of mischarged Val-tRNA(Ile). In Shewanella pealeana (strain ATCC 700345 / ANG-SQ1), this protein is Isoleucine--tRNA ligase.